The following is an 85-amino-acid chain: Beta-insect depressant toxin Lqh-dprIT3b (85 aa).

The N-terminal stretch at 1-21 (MKLLLLLTISASMLIEGLVNA) is a signal peptide. Residues 22-82 (DGYIRGGDGC…EWDYETNTCG (61 aa)) enclose the LCN-type CS-alpha/beta domain. Cystine bridges form between Cys31–Cys81, Cys35–Cys56, Cys42–Cys63, and Cys46–Cys65. The residue at position 82 (Gly82) is a Glycine amide.

Belongs to the long (4 C-C) scorpion toxin superfamily. Sodium channel inhibitor family. Beta subfamily. In terms of tissue distribution, expressed by the venom gland.

It is found in the secreted. Its function is as follows. Depressant insect beta-toxins cause a transient contraction paralysis followed by a slow flaccid paralysis. They bind voltage-independently at site-4 of sodium channels (Nav) and block action potentials, primarily by depolarizing the axonal membrane and suppressing the sodium current. This depressant toxin is active only on insects. It is found in a relatively small amount in the venom, and its activity on insects is 10-fold higher compared to other known depressant toxins. The chain is Beta-insect depressant toxin Lqh-dprIT3b from Leiurus hebraeus (Hebrew deathstalker scorpion).